The primary structure comprises 399 residues: Enoyl-[acyl-carrier-protein] reductase [NADH] (399 aa).

Residues 48–53 (GASTGY), 74–75 (FE), 111–112 (DA), and 139–140 (LA) contribute to the NAD(+) site. Residue tyrosine 225 participates in substrate binding. The active-site Proton donor is tyrosine 235. NAD(+) is bound by residues lysine 244 and 274 to 276 (VVT).

Belongs to the TER reductase family. Monomer.

The enzyme catalyses a 2,3-saturated acyl-[ACP] + NAD(+) = a (2E)-enoyl-[ACP] + NADH + H(+). It participates in lipid metabolism; fatty acid biosynthesis. In terms of biological role, involved in the final reduction of the elongation cycle of fatty acid synthesis (FAS II). Catalyzes the reduction of a carbon-carbon double bond in an enoyl moiety that is covalently linked to an acyl carrier protein (ACP). The chain is Enoyl-[acyl-carrier-protein] reductase [NADH] from Yersinia pseudotuberculosis serotype O:1b (strain IP 31758).